A 333-amino-acid chain; its full sequence is Cap-specific mRNA (nucleoside-2'-O-)-methyltransferase (333 aa).

Tyr-22 is a binding site for mRNA. S-adenosyl-L-methionine contacts are provided by Gln-39, Tyr-66, Gly-68, Gly-72, Asp-95, Arg-97, Val-116, and Asp-138. Positions 169–249 are binding to NPH-I; it reads PVASSLKWRC…NKIVRNKVVI (81 aa). Catalysis depends on Lys-175, which acts as the For methyltransferase activity. MRNA is bound by residues 177 to 180, Asp-182, 205 to 207, and Glu-233; these read RCPF and SAE. The span at 305-320 shows a compositional bias: basic and acidic residues; sequence SHEPIQRKISSKDSMS. A disordered region spans residues 305 to 333; the sequence is SHEPIQRKISSKDSMSKNRNSKRSVRGNK. Residues 323 to 333 are compositionally biased toward basic residues; the sequence is RNSKRSVRGNK.

It belongs to the class I-like SAM-binding methyltransferase superfamily. Poxvirus/kinetoplastid 2'-O-MTase family. In terms of assembly, interacts with poly(A) polymerase catalytic subunit OPG063. Interacts with OPG109 and OPG123; these interactions might help linking transcription to capping and polyadenylation.

The protein resides in the virion. It catalyses the reaction a 5'-end (N(7)-methyl 5'-triphosphoguanosine)-ribonucleoside in mRNA + S-adenosyl-L-methionine = a 5'-end (N(7)-methyl 5'-triphosphoguanosine)-(2'-O-methyl-ribonucleoside) in mRNA + S-adenosyl-L-homocysteine + H(+). Its function is as follows. Displays methyltransferase, positive regulation of the poly(A) polymerase and transcription elongation activities. Involved in the modification of both mRNA ends and in intermediate and late gene positive transcription elongation. At the mRNAs 5' end, methylates the ribose 2' OH group of the first transcribed nucleotide, thereby producing a 2'-O-methylpurine cap. At the 3' end, functions as a processivity factor which stimulates the activity of the viral poly(A) polymerase OPG063 that creates mRNA's poly(A) tail. In the presence of OPG102, OPG063 does not dissociate from the RNA allowing tail elongation to around 250 adenylates. The protein is Cap-specific mRNA (nucleoside-2'-O-)-methyltransferase (OPG102) of Cynomys gunnisoni (Gunnison's prairie dog).